The following is a 257-amino-acid chain: Type III pantothenate kinase (257 aa).

6–13 (DVGNTSTK) is an ATP binding site. 109 to 112 (GADR) is a binding site for substrate. Aspartate 111 acts as the Proton acceptor in catalysis. Aspartate 132 serves as a coordination point for K(+). Threonine 135 is a binding site for ATP. Threonine 187 lines the substrate pocket.

This sequence belongs to the type III pantothenate kinase family. As to quaternary structure, homodimer. It depends on NH4(+) as a cofactor. The cofactor is K(+).

It is found in the cytoplasm. The enzyme catalyses (R)-pantothenate + ATP = (R)-4'-phosphopantothenate + ADP + H(+). It functions in the pathway cofactor biosynthesis; coenzyme A biosynthesis; CoA from (R)-pantothenate: step 1/5. Its function is as follows. Catalyzes the phosphorylation of pantothenate (Pan), the first step in CoA biosynthesis. The sequence is that of Type III pantothenate kinase from Anaplasma marginale (strain St. Maries).